The primary structure comprises 70 residues: MSDFNLRRYYTSNQLLKFSNEYPKSMTEIKKGELKGYDIFTSSTINMVVGNLLRDVQNRIDQADQIEKRS.

This is an uncharacterized protein from Schizosaccharomyces pombe (strain 972 / ATCC 24843) (Fission yeast).